Here is a 624-residue protein sequence, read N- to C-terminus: Outer dynein arm-docking complex subunit 4 (624 aa).

TPR repeat units lie at residues 11–44 (FPSY…QSGD), 46–78 (NCLV…DPTF), 79–112 (CKGI…RPDR), 273–309 (LKSL…NQEE), 318–351 (GNLY…AKEH), 358–391 (SRAL…AKTT), 395–428 (TWLF…AEEE), and 435–468 (LNAS…AKLV). A disordered region spans residues 511–624 (MSQMDLQGAS…VQKLEKTKEE (114 aa)). 3 stretches are compositionally biased toward basic and acidic residues: residues 520-557 (SEKE…DRKS), 576-588 (IRRE…RRLS), and 595-624 (PSED…TKEE).

Component of the outer dynein arm-docking complex along with ODAD1, ODAD2, and ODAD3. Interacts with ODAD1; this interaction may facilitate the recruitment and/or attachment of outer dynein arm docking complex proteins, including ODAD1, ODAD3 and ODAD2, to ciliary axonemes. Interacts with components of the IFT complex A, including IFT140, TTC21B/IFT139 and WDR19/IFT144, and the IFT complex B, including IFT46, IFT52 and IFT57. Interacts with CFAP53.

The protein localises to the cell projection. Its subcellular location is the cilium. It localises to the cytoplasm. The protein resides in the cytoskeleton. It is found in the cilium axoneme. Functionally, component of the outer dynein arm-docking complex (ODA-DC) that mediates outer dynein arms (ODA) binding onto the doublet microtubule. Plays an essential role for the assembly of ODA-DC and for the docking of ODA in ciliary axoneme. The protein is Outer dynein arm-docking complex subunit 4 (Odad4) of Mus musculus (Mouse).